A 316-amino-acid chain; its full sequence is Protein lifeguard 2 (316 aa).

The tract at residues 1 to 46 (MTQGKLSVANKAPGTEGQQQANGEKKETPAVPSAPPSYEEATSGEG) is disordered. 3 consecutive transmembrane segments (helical) span residues 106 to 126 (VYTI…LFTF), 138 to 158 (PGWY…LACC), and 165 to 185 (FPWN…LTGM). An N-linked (GlcNAc...) asparagine glycan is attached at Asn191. 4 helical membrane passes run 194–214 (SVLL…VFSF), 225–245 (GVLF…AILL), 251–271 (PWLH…FLAF), and 290–310 (IFGA…FLQL).

This sequence belongs to the BI1 family. LFG subfamily. In terms of assembly, interacts with FAS/TNFRSF6 and BAX.

It is found in the cell membrane. The protein resides in the membrane raft. It localises to the postsynaptic cell membrane. Functionally, antiapoptotic protein which protects cells uniquely from Fas-induced apoptosis. Regulates Fas-mediated apoptosis in neurons by interfering with caspase-8 activation. Plays a role in cerebellar development by affecting cerebellar size, internal granular layer (IGL) thickness, and Purkinje cell (PC) development. The chain is Protein lifeguard 2 (FAIM2) from Bos taurus (Bovine).